The sequence spans 133 residues: MAEKIQFELVSPAKLLVSSKVDMVVVPGAEGDFGALALHAPMITTVRPGVIDIHDGGKVSSSVFVAGGFAEVNEERITVLAEEAIPVGELTAEMAEARKKAAKEALDDAKSDRDKAHAGRLMLVAEAMAAAVA.

Belongs to the ATPase epsilon chain family. As to quaternary structure, F-type ATPases have 2 components, CF(1) - the catalytic core - and CF(0) - the membrane proton channel. CF(1) has five subunits: alpha(3), beta(3), gamma(1), delta(1), epsilon(1). CF(0) has three main subunits: a, b and c.

It localises to the cell inner membrane. In terms of biological role, produces ATP from ADP in the presence of a proton gradient across the membrane. This chain is ATP synthase epsilon chain, found in Paramagnetospirillum magneticum (strain ATCC 700264 / AMB-1) (Magnetospirillum magneticum).